A 208-amino-acid polypeptide reads, in one-letter code: Pectinesterase inhibitor 6 (208 aa).

The first 30 residues, M1–A30, serve as a signal peptide directing secretion. C53 and C62 are joined by a disulfide. Residues N54 and N75 are each glycosylated (N-linked (GlcNAc...) asparagine). An intrachain disulfide couples C118 to C165.

Belongs to the PMEI family.

It is found in the secreted. The protein resides in the extracellular space. Its subcellular location is the apoplast. Pectin methylesterase (PME) inhibitor that targets PME from seeds and modulates PME activity and pectin methylesterification during seed germination. Promotes mucilage release by limiting methylesterification of homogalacturonan in seed coat epidermal cells. The chain is Pectinesterase inhibitor 6 from Arabidopsis thaliana (Mouse-ear cress).